Here is a 414-residue protein sequence, read N- to C-terminus: Na(+)-translocating NADH-quinone reductase subunit B (414 aa).

A run of 4 helical transmembrane segments spans residues 56-76, 82-104, 129-149, and 164-184; these read IMIM…YNVG, ALNH…HYWL, FLPI…LFCM, and ILFA…LGIT. Thr236 is modified (FMN phosphoryl threonine). The next 5 helical transmembrane spans lie at 275-295, 297-317, 325-345, 358-378, and 381-401; these read VSTL…IASW, IIAG…VIGS, MPWH…FMAT, WAYG…NPAY, and GMML…HIVI.

This sequence belongs to the NqrB/RnfD family. In terms of assembly, composed of six subunits; NqrA, NqrB, NqrC, NqrD, NqrE and NqrF. It depends on FMN as a cofactor.

It is found in the cell inner membrane. The catalysed reaction is a ubiquinone + n Na(+)(in) + NADH + H(+) = a ubiquinol + n Na(+)(out) + NAD(+). Its function is as follows. NQR complex catalyzes the reduction of ubiquinone-1 to ubiquinol by two successive reactions, coupled with the transport of Na(+) ions from the cytoplasm to the periplasm. NqrA to NqrE are probably involved in the second step, the conversion of ubisemiquinone to ubiquinol. This is Na(+)-translocating NADH-quinone reductase subunit B from Vibrio anguillarum (Listonella anguillarum).